Here is a 98-residue protein sequence, read N- to C-terminus: MSLVHINILMAFIMSLTGLLMYRSHLMSALLCLEGMMLSLFVLATLTILNSHFTLANMMPIILLVFAACEAAIGLALLVMISNTYGTDYVQNLNLLQC.

A run of 3 helical transmembrane segments spans residues 1–21, 29–49, and 61–81; these read MSLV…GLLM, ALLC…LTIL, and IILL…LVMI.

This sequence belongs to the complex I subunit 4L family. Core subunit of respiratory chain NADH dehydrogenase (Complex I) which is composed of 45 different subunits.

Its subcellular location is the mitochondrion inner membrane. The enzyme catalyses a ubiquinone + NADH + 5 H(+)(in) = a ubiquinol + NAD(+) + 4 H(+)(out). Its function is as follows. Core subunit of the mitochondrial membrane respiratory chain NADH dehydrogenase (Complex I) which catalyzes electron transfer from NADH through the respiratory chain, using ubiquinone as an electron acceptor. Part of the enzyme membrane arm which is embedded in the lipid bilayer and involved in proton translocation. The polypeptide is NADH-ubiquinone oxidoreductase chain 4L (MT-ND4L) (Delphinapterus leucas (Beluga whale)).